A 374-amino-acid polypeptide reads, in one-letter code: tRNA-specific 2-thiouridylase MnmA (374 aa).

ATP-binding positions include 10–17 (AMSGGVDS) and leucine 36. Catalysis depends on cysteine 111, which acts as the Nucleophile. Cysteine 111 and cysteine 209 are disulfide-bonded. Glycine 135 is an ATP binding site. The interaction with tRNA stretch occupies residues 159-161 (KDQ). Cysteine 209 (cysteine persulfide intermediate) is an active-site residue.

The protein belongs to the MnmA/TRMU family.

The protein localises to the cytoplasm. The catalysed reaction is S-sulfanyl-L-cysteinyl-[protein] + uridine(34) in tRNA + AH2 + ATP = 2-thiouridine(34) in tRNA + L-cysteinyl-[protein] + A + AMP + diphosphate + H(+). Catalyzes the 2-thiolation of uridine at the wobble position (U34) of tRNA, leading to the formation of s(2)U34. The sequence is that of tRNA-specific 2-thiouridylase MnmA from Acidobacterium capsulatum (strain ATCC 51196 / DSM 11244 / BCRC 80197 / JCM 7670 / NBRC 15755 / NCIMB 13165 / 161).